Consider the following 937-residue polypeptide: Inactive tyrosine-protein kinase transmembrane receptor ROR1 (937 aa).

The N-terminal stretch at 1 to 29 is a signal peptide; that stretch reads MHRPRRRGTRPPPLALLAALLLAARGADA. The Extracellular segment spans residues 30–406; that stretch reads QETELSVSAE…KEKNKMEILY (377 aa). An Ig-like C2-type domain is found at 42–141; the sequence is PTSSWNTSSE…VATNGKKVVS (100 aa). Asparagine 47 and asparagine 66 each carry an N-linked (GlcNAc...) asparagine glycan. 9 disulfides stabilise this stretch: cysteine 79–cysteine 131, cysteine 170–cysteine 235, cysteine 178–cysteine 228, cysteine 219–cysteine 260, cysteine 248–cysteine 296, cysteine 252–cysteine 282, cysteine 313–cysteine 391, cysteine 334–cysteine 374, and cysteine 362–cysteine 386. An FZ domain is found at 165 to 299; sequence EEDGFCQPYR…SPEAANCIRI (135 aa). An N-linked (GlcNAc...) asparagine glycan is attached at asparagine 184. Residues 312–391 form the Kringle domain; that stretch reads KCYNSTGVDY…KSDLCDIPAC (80 aa). Asparagine 315 carries an N-linked (GlcNAc...) asparagine glycan. A helical transmembrane segment spans residues 407-427; sequence ILVPSVAIPLAIAFLFFFICV. At 428-937 the chain is on the cytoplasmic side; that stretch reads CRNNQKSSSP…HTESMISAEV (510 aa). One can recognise a Protein kinase domain in the interval 473 to 746; the sequence is VRFMEELGEC…PRFKDIHVRL (274 aa). ATP is bound by residues 479-487 and lysine 506; that span reads LGECTFGKI. At tyrosine 645 the chain carries Phosphotyrosine; by autocatalysis. The segment covering 753–762 has biased composition (low complexity); it reads SSHTSSTTPS. 3 disordered regions span residues 753-778, 840-890, and 916-937; these read SSHT…ASPV, GPPR…HMSI, and QSSL…SAEV. The segment covering 763-778 has biased composition (polar residues); sequence GGNATTQTTSLSASPV. Low complexity predominate over residues 854-864; that stretch reads RSPSSASGSTS. Residues 865–880 show a composition bias toward polar residues; that stretch reads TGHVASLPSSGSNQEA.

It belongs to the protein kinase superfamily. Tyr protein kinase family. ROR subfamily. As to quaternary structure, interacts with ERBB2 and IGFBP5. As to expression, at postnatal P0, expressed in heart, lung, liver, kidney, spleen and inner ear.

Its subcellular location is the membrane. The protein resides in the cell projection. It is found in the axon. Has very low kinase activity in vitro and is unlikely to function as a tyrosine kinase in vivo. Receptor for ligand WNT5A which activate downstream NFkB signaling pathway and may result in the inhibition of WNT3A-mediated signaling. In inner ear, crucial for spiral ganglion neurons to innervate auditory hair cells. Via IGFBP5 ligand, forms a complex with ERBB2 to enhance CREB oncogenic signaling. The chain is Inactive tyrosine-protein kinase transmembrane receptor ROR1 (Ror1) from Mus musculus (Mouse).